A 103-amino-acid chain; its full sequence is Large ribosomal subunit protein uL24 (103 aa).

It belongs to the universal ribosomal protein uL24 family. Part of the 50S ribosomal subunit.

Functionally, one of two assembly initiator proteins, it binds directly to the 5'-end of the 23S rRNA, where it nucleates assembly of the 50S subunit. One of the proteins that surrounds the polypeptide exit tunnel on the outside of the subunit. The protein is Large ribosomal subunit protein uL24 of Actinobacillus pleuropneumoniae serotype 5b (strain L20).